Reading from the N-terminus, the 122-residue chain is Large ribosomal subunit protein uL14c (122 aa).

This sequence belongs to the universal ribosomal protein uL14 family. As to quaternary structure, part of the 50S ribosomal subunit.

Its subcellular location is the plastid. The protein resides in the chloroplast. Its function is as follows. Binds to 23S rRNA. This is Large ribosomal subunit protein uL14c from Ipomoea purpurea (Common morning glory).